The chain runs to 366 residues: Glucan organizing enzyme 1 (366 aa).

The Extracellular segment spans residues 1 to 24; sequence MLPLWARGGKPIVIPLPQKRHITL. The helical transmembrane segment at 25 to 45 threads the bilayer; it reads PALPILLLLLGTGFLLHSLFF. Topologically, residues 46-366 are cytoplasmic; sequence PPPPPHPPGK…ETYKKWKRGH (321 aa).

It belongs to the glycosyltransferase 32 family.

It is found in the cell membrane. Functionally, plays a role in the localization of glycogen rosettes to the plasma membrane. Required for correct cell wall organization and may facilitate the connection between beta-1,3-glucan and beta-1,6-glucan in the cell wall. The polypeptide is Glucan organizing enzyme 1 (Cryptococcus neoformans var. grubii serotype A (strain H99 / ATCC 208821 / CBS 10515 / FGSC 9487) (Filobasidiella neoformans var. grubii)).